A 393-amino-acid chain; its full sequence is Major outer membrane porin, serovar L1 (393 aa).

The first 22 residues, 1–22 (MKKLLKSVLVFAALSSASSLQA), serve as a signal peptide directing secretion.

Belongs to the chlamydial porin (CP) (TC 1.B.2) family. As to quaternary structure, part of a disulfide cross-linked outer membrane complex (COMC) composed of the major outer membrane porin (MOMP), the small cysteine-rich protein (OmcA) and the large cysteine-rich periplasmic protein (OmcB).

It localises to the cell outer membrane. Its function is as follows. In elementary bodies (EBs, the infectious stage, which is able to survive outside the host cell) provides the structural integrity of the outer envelope through disulfide cross-links with the small cysteine-rich protein and the large cysteine-rich periplasmic protein. It has been described in publications as the Sarkosyl-insoluble COMC (Chlamydia outer membrane complex), and serves as the functional equivalent of peptidoglycan. In terms of biological role, permits diffusion of specific solutes through the outer membrane. The sequence is that of Major outer membrane porin, serovar L1 (ompA) from Chlamydia trachomatis.